The chain runs to 113 residues: Nucleoid-associated protein sync_0026 (113 aa).

It belongs to the YbaB/EbfC family. Homodimer.

The protein resides in the cytoplasm. Its subcellular location is the nucleoid. Binds to DNA and alters its conformation. May be involved in regulation of gene expression, nucleoid organization and DNA protection. The chain is Nucleoid-associated protein sync_0026 from Synechococcus sp. (strain CC9311).